The chain runs to 41 residues: Alpha-conotoxin CIB (41 aa).

Positions 1 to 21 (SDGRNEAANDEASDVIELALK) are excised as a propeptide. 2 disulfides stabilise this stretch: Cys23/Cys29 and Cys24/Cys37. Residues 25–27 (SNP) are ser-Xaa-Pro motif, crucial for potent interaction with nAChR. Cys37 bears the Cysteine amide mark.

It belongs to the conotoxin A superfamily. Expressed by the venom duct.

It localises to the secreted. In terms of biological role, alpha-conotoxins act on postsynaptic membranes, they bind to the nicotinic acetylcholine receptors (nAChR) and thus inhibit them. This toxin blocks rat neuronal nAChR alpha-3-beta-2/CHRNA3-CHRNB2 (IC(50)=128.9 nM) and alpha-7/CHRNA7 (IC(50)=1511 nM). In vivo, intramuscular injection into zebrafish does not produce any effect on the locomotion of zebrafish. The sequence is that of Alpha-conotoxin CIB from Conus catus (Cat cone).